Reading from the N-terminus, the 102-residue chain is uncharacterized protein (102 aa).

Belongs to the Gram-positive plasmids replication protein type 2 family.

This is an uncharacterized protein from Staphylococcus aureus.